A 565-amino-acid chain; its full sequence is Acyl-CoA ligase easD (565 aa).

Residues 213-221 (TSGTSGKQK), 354-359 (HAYGLT), Asp438, Arg457, and Lys555 contribute to the ATP site. Residues 284–354 (DMQLMLKTIE…KLRPTWKINH (71 aa)) form an SBD1 region. An SBD2 region spans residues 355–417 (AYGLTETGVV…FNSPSCFLGY (63 aa)).

It belongs to the ATP-dependent AMP-binding enzyme family.

It participates in antibiotic biosynthesis. Acyl-CoA ligase; part of the gene cluster that mediates the biosynthesis of emericellamides, secondary metabolites acting as antibiotics. The biosynthesis of emericellamides initiates from the highly reducing polyketide synthase easB which catalyzes the formation of the linear polyketide chain. EasB produces several polyketides that can be further processed by the downstream enzymes. The polyketides are released from easB as linear polyketide carboxylic acids, which are converted to CoA thioesters by the acyl-CoA ligase easD. The substrates are then loaded onto the acyltransferase easC, which shuttles them to the first thiolation (T) domain of the nonribosomal peptide synthetase easA. EasA then performs condensation of the polyketides with one glycine, two alanine, one valine and one leucine residues. A last step of cyclization leads to the production of emericellamides. The chain is Acyl-CoA ligase easD from Emericella nidulans (strain FGSC A4 / ATCC 38163 / CBS 112.46 / NRRL 194 / M139) (Aspergillus nidulans).